A 92-amino-acid polypeptide reads, in one-letter code: Transcription factor PRE4 (92 aa).

One can recognise a bHLH domain in the interval 5-60 (KSRSRQTGASMITDEQINDLVLQLHRLLPELANNRRSGKVSASRVLQETCSYIRNL).

Belongs to the bHLH protein family. In terms of assembly, interacts with HFR1 and IBH1. In terms of tissue distribution, expressed in roots, leaves, stems and flowers.

It localises to the nucleus. Its function is as follows. Atypical and probable non DNA-binding bHLH transcription factor that integrates multiple signaling pathways to regulate cell elongation and plant development. Regulates light responses by binding and inhibiting the activity of the bHLH transcription factor HFR1, a critical regulator of light signaling and shade avoidance. May have a regulatory role in various aspects of gibberellin-dependent growth and development. The polypeptide is Transcription factor PRE4 (PRE4) (Arabidopsis thaliana (Mouse-ear cress)).